Consider the following 440-residue polypeptide: Peroxisome proliferator-activated receptor delta (440 aa).

A disordered region spans residues 1-53 (MEQPQEETPEAREEEKEEVAMGDGAPELNGGPEHTLPSSSCADLSQNSSPSSL). Polar residues predominate over residues 36–53 (LPSSSCADLSQNSSPSSL). A DNA-binding region (nuclear receptor) is located at residues 70–144 (NMECRVCGDK…LGMSHNAIRF (75 aa)). 2 NR C4-type zinc fingers span residues 73–93 (CRVCGDKASGFHYGVHACEGC) and 110–132 (CDRICKIQKKNRNKCQYCRFQKC). The NR LBD domain maps to 210–438 (FVIHDIETLW…HPLLQEIYKD (229 aa)).

This sequence belongs to the nuclear hormone receptor family. NR1 subfamily. As to quaternary structure, heterodimer with the retinoid X receptor. Interacts (via domain NR LBD) with CRY1 and CRY2 in a ligand-dependent manner. In terms of processing, 'Lys-48'-linked polyubiquitinated; leading to proteasomal degradation. Deubiquitinated and stabilized by OTUD3. In terms of tissue distribution, heart, adrenal and intestine.

It is found in the nucleus. In terms of biological role, ligand-activated transcription factor key mediator of energy metabolism in adipose tissues. Receptor that binds peroxisome proliferators such as hypolipidemic drugs and fatty acids. Has a preference for poly-unsaturated fatty acids, such as gamma-linoleic acid and eicosapentanoic acid. Once activated by a ligand, the receptor binds to promoter elements of target genes. Regulates the peroxisomal beta-oxidation pathway of fatty acids. Functions as transcription activator for the acyl-CoA oxidase gene. Decreases expression of NPC1L1 once activated by a ligand. The polypeptide is Peroxisome proliferator-activated receptor delta (Ppard) (Mus musculus (Mouse)).